The sequence spans 89 residues: MALSKDEKAATLKEFGLHETDTGSPEAQVALLSARINQLTEHLKDHKHDHHSRRGLLLLVGRRKGLLKYLASTDIERYRSLIERLGLRR.

This sequence belongs to the universal ribosomal protein uS15 family. Part of the 30S ribosomal subunit. Forms a bridge to the 50S subunit in the 70S ribosome, contacting the 23S rRNA.

Its function is as follows. One of the primary rRNA binding proteins, it binds directly to 16S rRNA where it helps nucleate assembly of the platform of the 30S subunit by binding and bridging several RNA helices of the 16S rRNA. Functionally, forms an intersubunit bridge (bridge B4) with the 23S rRNA of the 50S subunit in the ribosome. The chain is Small ribosomal subunit protein uS15 from Corynebacterium urealyticum (strain ATCC 43042 / DSM 7109).